A 120-amino-acid polypeptide reads, in one-letter code: NAD(P)H-quinone oxidoreductase subunit 3, chloroplastic (120 aa).

3 helical membrane passes run 9-29, 64-84, and 88-108; these read IFWA…IISG, MFAL…PWAM, and VLGV…IVGS.

Belongs to the complex I subunit 3 family. NDH is composed of at least 16 different subunits, 5 of which are encoded in the nucleus.

It localises to the plastid. The protein resides in the chloroplast thylakoid membrane. The enzyme catalyses a plastoquinone + NADH + (n+1) H(+)(in) = a plastoquinol + NAD(+) + n H(+)(out). The catalysed reaction is a plastoquinone + NADPH + (n+1) H(+)(in) = a plastoquinol + NADP(+) + n H(+)(out). In terms of biological role, NDH shuttles electrons from NAD(P)H:plastoquinone, via FMN and iron-sulfur (Fe-S) centers, to quinones in the photosynthetic chain and possibly in a chloroplast respiratory chain. The immediate electron acceptor for the enzyme in this species is believed to be plastoquinone. Couples the redox reaction to proton translocation, and thus conserves the redox energy in a proton gradient. The polypeptide is NAD(P)H-quinone oxidoreductase subunit 3, chloroplastic (Lemna minor (Common duckweed)).